A 669-amino-acid polypeptide reads, in one-letter code: GTP-binding protein 1 (669 aa).

Residues 1–32 (MAAERSRSPMESPVPASMFAPEPSSPGAARAA) are disordered. Phosphoserine occurs at positions 6, 8, 12, 24, 25, 44, 47, and 69. The tr-type G domain maps to 158-389 (FLEVRVAVVG…LNLLSPRTSY (232 aa)). The tract at residues 167 to 174 (GNVDAGKS) is G1. 167–174 (GNVDAGKS) contacts GTP. The segment at 206–210 (GRTSS) is G2. A G3 region spans residues 252-255 (DLAG). GTP-binding positions include 252–256 (DLAGH) and 308–311 (TKID). The G4 stretch occupies residues 308 to 311 (TKID). The G5 stretch occupies residues 366-368 (SNV). Residues 573–595 (LLQTTNNSPMNSKPQQIKMQSTK) show a composition bias toward polar residues. The tract at residues 573–669 (LLQTTNNSPM…GACMTPASGC (97 aa)) is disordered. The residue at position 580 (Ser-580) is a Phosphoserine. Low complexity predominate over residues 633 to 645 (SSSLQPQPKPSSG). Over residues 646–657 (GRRRGGQRHKVK) the composition is skewed to basic residues.

Belongs to the TRAFAC class translation factor GTPase superfamily. Classic translation factor GTPase family. GTPBP1 subfamily. Interacts with EXOSC2/RRP4, EXOSC3/RRP40, EXOSC5/RRP46, HNRNPD, HNRNPR and SYNCRIP. Identified in a complex with AANAT mRNA, but does not bind mRNA by itself.

It localises to the cytoplasm. Its function is as follows. Promotes degradation of target mRNA species. Plays a role in the regulation of circadian mRNA stability. Binds GTP and has GTPase activity. This Bos taurus (Bovine) protein is GTP-binding protein 1 (GTPBP1).